Consider the following 246-residue polypeptide: tRNA pseudouridine synthase A (246 aa).

Catalysis depends on aspartate 51, which acts as the Nucleophile. A substrate-binding site is contributed by tyrosine 105.

The protein belongs to the tRNA pseudouridine synthase TruA family.

It carries out the reaction uridine(38/39/40) in tRNA = pseudouridine(38/39/40) in tRNA. Its function is as follows. Formation of pseudouridine at positions 38, 39 and 40 in the anticodon stem and loop of transfer RNAs. This Thermoplasma volcanium (strain ATCC 51530 / DSM 4299 / JCM 9571 / NBRC 15438 / GSS1) protein is tRNA pseudouridine synthase A.